Here is a 427-residue protein sequence, read N- to C-terminus: Tol-Pal system protein TolB (427 aa).

An N-terminal signal peptide occupies residues 1–23 (MKLLKRLVSVFAIVLAVGSNAFA).

It belongs to the TolB family. In terms of assembly, the Tol-Pal system is composed of five core proteins: the inner membrane proteins TolA, TolQ and TolR, the periplasmic protein TolB and the outer membrane protein Pal. They form a network linking the inner and outer membranes and the peptidoglycan layer.

It localises to the periplasm. Its function is as follows. Part of the Tol-Pal system, which plays a role in outer membrane invagination during cell division and is important for maintaining outer membrane integrity. In Haemophilus influenzae (strain PittEE), this protein is Tol-Pal system protein TolB.